The following is a 325-amino-acid chain: Tetraacyldisaccharide 4'-kinase (325 aa).

An ATP-binding site is contributed by 58 to 65 (TVGGSGKT).

This sequence belongs to the LpxK family.

It carries out the reaction a lipid A disaccharide + ATP = a lipid IVA + ADP + H(+). It functions in the pathway glycolipid biosynthesis; lipid IV(A) biosynthesis; lipid IV(A) from (3R)-3-hydroxytetradecanoyl-[acyl-carrier-protein] and UDP-N-acetyl-alpha-D-glucosamine: step 6/6. Transfers the gamma-phosphate of ATP to the 4'-position of a tetraacyldisaccharide 1-phosphate intermediate (termed DS-1-P) to form tetraacyldisaccharide 1,4'-bis-phosphate (lipid IVA). The protein is Tetraacyldisaccharide 4'-kinase of Coxiella burnetii (strain Dugway 5J108-111).